Reading from the N-terminus, the 129-residue chain is Large ribosomal subunit protein bL19 (129 aa).

This sequence belongs to the bacterial ribosomal protein bL19 family.

In terms of biological role, this protein is located at the 30S-50S ribosomal subunit interface and may play a role in the structure and function of the aminoacyl-tRNA binding site. The chain is Large ribosomal subunit protein bL19 from Methylobacillus flagellatus (strain ATCC 51484 / DSM 6875 / VKM B-1610 / KT).